Reading from the N-terminus, the 157-residue chain is Transcription elongation factor GreB (157 aa).

It belongs to the GreA/GreB family. GreB subfamily.

In terms of biological role, necessary for efficient RNA polymerase transcription elongation past template-encoded arresting sites. The arresting sites in DNA have the property of trapping a certain fraction of elongating RNA polymerases that pass through, resulting in locked ternary complexes. Cleavage of the nascent transcript by cleavage factors such as GreA or GreB allows the resumption of elongation from the new 3'terminus. GreB releases sequences of up to 9 nucleotides in length. The protein is Transcription elongation factor GreB of Salmonella typhi.